We begin with the raw amino-acid sequence, 239 residues long: Ribosomal RNA small subunit methyltransferase G (239 aa).

Residues G78, F83, A129–E130, and R148 each bind S-adenosyl-L-methionine.

It belongs to the methyltransferase superfamily. RNA methyltransferase RsmG family.

Its subcellular location is the cytoplasm. In terms of biological role, specifically methylates the N7 position of a guanine in 16S rRNA. The sequence is that of Ribosomal RNA small subunit methyltransferase G from Clostridium beijerinckii (strain ATCC 51743 / NCIMB 8052) (Clostridium acetobutylicum).